We begin with the raw amino-acid sequence, 329 residues long: MTTVSINKPNLLKFKHVKSFQPQEKDCGPVTSLNFDDNGQFLLTSSSNDTMQLYSATNCKFLDTIASKKYGCHSAIFTHAQNECIYSSTMKNFDIKYLNLETNQYLRYFSGHGALVNDLKMNPVNDTFLSSSYDESVRLWDLKISKPQVIIPSLVPNCIAYDPSGLVFALGNPENFEIGLYNLKKIQEGPFLIIKINDATFSQWNKLEFSNNGKYLLVGSSIGKHLIFDAFTGQQLFELIGTRAFPMREFLDSGSACFTPDGEFVLGTDYDGRIAIWNHSDSISNKVLRPQGFIPCVSHETCPRSIAFNPKYSMFVTADETVDFYVYDE.

WD repeat units lie at residues 25-64 (KDCGPVTSLNFDDNGQFLLTSSSNDTMQLYSATNCKFLDT), 111-150 (GHGALVNDLKMNPVNDTFLSSSYDESVRLWDLKISKPQVI), 152-191 (PSLVPNCIAYDPSGLVFALGNPENFEIGLYNLKKIQEGPF), 199-238 (ATFSQWNKLEFSNNGKYLLVGSSIGKHLIFDAFTGQQLFE), 246-287 (PMRE…SNKV), and 298-328 (SHETCPRSIAFNPKYSMFVTADETVDFYVYD).

This sequence belongs to the WD repeat SWD2 family. In terms of assembly, component of the Set1C/COMPASS complex which consists of SET1(2), BRE2(2), SPP1(2), SDC1(1), SHG1(1), SWD1(1), SWD2(1), and SWD3(1). Component of the cleavage and polyadenylation factor (CPF) complex, which is composed of PTI1, SYC1, SSU72, GLC7, MPE1, REF2, PFS2, PTA1, YSH1/BRR5, SWD2, CFT2/YDH1, YTH1, CFT1/YHH1, FIP1 and PAP1. Component of the APT complex, which is a subcomplex of CPF, and is composed of PTI1, SYC1, SSU72, GLC7, REF2, PTA1 and SWD2.

The protein resides in the nucleus. It localises to the chromosome. It is found in the telomere. Functionally, the COMPASS (Set1C) complex specifically mono-, di- and trimethylates histone H3 to form H3K4me1/2/3, which subsequently plays a role in telomere length maintenance and transcription elongation regulation. In terms of biological role, involved in mediating RNA polymerase II termination. Component of the cleavage and polyadenylation factor (CPF) complex, which plays a key role in polyadenylation-dependent pre-mRNA 3'-end formation and cooperates with cleavage factors including the CFIA complex and NAB4/CFIB. Component of the APT complex, which may be involved in polyadenylation-independent transcript 3'-end formation. This is COMPASS component SWD2 (SWD2) from Saccharomyces cerevisiae (strain ATCC 204508 / S288c) (Baker's yeast).